The sequence spans 452 residues: 51.5 kDa protein (452 aa).

The region spanning 1-126 is the Helicase ATP-binding domain; it reads MIQSPPGSGK…KDTYDYMIEG (126 aa). One can recognise a Helicase C-terminal domain in the interval 177 to 333; that stretch reads DVVQEYVKHA…NIVQAKQCPD (157 aa). The segment at 331–348 is a zinc-finger region; sequence CPDCSAMWPLSQKMCNLC.

Its function is as follows. May play a role in either regulating bacteriophages replication or specifying expression of its own genes. This Lactococcus (lactic streptococci) protein is 51.5 kDa protein.